A 1245-amino-acid chain; its full sequence is Structural polyprotein (1245 aa).

Residues 1-106 (MNRGFFNMLG…KPKPGKRQRM (106 aa)) are disordered. A host transcription inhibition region spans residues 37 to 70 (GLASQIQQLTTAVSALVIGQATRPQPPRPRPPPR). Over residues 38-49 (LASQIQQLTTAV) the composition is skewed to polar residues. The Nuclear localization signal signature appears at 63–100 (PRPRPPPRQKKQAPKQPPKPKKPKTQEKKKKQPAKPKP). The span at 67–106 (PPPRQKKQAPKQPPKPKKPKTQEKKKKQPAKPKPGKRQRM) shows a compositional bias: basic residues. The segment at 86–115 (KTQEKKKKQPAKPKPGKRQRMALKLEADRL) is binding to the viral RNA. The ribosome-binding stretch occupies residues 100 to 114 (PGKRQRMALKLEADR). The Peptidase S3 domain occupies 114–264 (RLFDVKNEDG…KTTPEGTEEW (151 aa)). The active-site Charge relay system is histidine 141. Positions 146 to 156 (IDHPVLSKLKF) match the Nuclear export signal motif. Residues 157–162 (TKSSAY) are interaction with spike glycoprotein E2. The Charge relay system role is filled by aspartate 163. The segment at 185-195 (PEGFYNWHHGA) is dimerization of the capsid protein. Residue serine 215 is the Charge relay system of the active site. Residues 221-225 (DNSGR) are dimerization of the capsid protein. Residues 249-253 (SKGKT) are interaction with spike glycoprotein E2. Residues 265–279 (SAAPLVTAMCLLGNV) are functions as an uncleaved signal peptide for the precursor of protein E3/E2. Asparagine 278 carries an N-linked (GlcNAc...) asparagine; by host glycan. 4 disulfide bridges follow: cysteine 283-cysteine 289, cysteine 480-cysteine 594, cysteine 529-cysteine 554, and cysteine 531-cysteine 548. Topologically, residues 329-690 (SVIDDFTLTS…HEIVQHYYHR (362 aa)) are extracellular. Asparagine 524 is a glycosylation site (N-linked (GlcNAc...) asparagine; by host). The N-linked (GlcNAc...) asparagine; by host glycan is linked to asparagine 646. Residues 682–730 (EIVQHYYHRHPVYTILAVASATVAMMIGVTVAVLCACKARRECLTPYAL) are a coiled coil. A helical membrane pass occupies residues 691-718 (HPVYTILAVASATVAMMIGVTVAVLCAC). The tract at residues 719–723 (KARRE) is interaction with the capsid protein. The Cytoplasmic portion of the chain corresponds to 719 to 751 (KARRECLTPYALAPNAVIPTSLALLCCVRSANA). S-palmitoyl cysteine; by host attachment occurs at residues cysteine 724, cysteine 744, and cysteine 745. Cysteine 724 and cysteine 745 are disulfide-bonded. At 752 to 763 (ETFTETMSYLWS) the chain is on the extracellular side. Residues 764–784 (NSQPFFWVQLCIPLAAFIVLM) form a helical membrane-spanning segment. Arginine 785 is a topological domain (cytoplasmic). Residues 786–806 (CCSCCLPFLVVAGAYLAKVDA) form a helical membrane-spanning segment. At 807 to 1214 (YEHATTVPNV…QAAISKTSWS (408 aa)) the chain is on the extracellular side. 4 cysteine pairs are disulfide-bonded: cysteine 855–cysteine 920, cysteine 868–cysteine 900, cysteine 869–cysteine 902, and cysteine 874–cysteine 884. The interval 890–907 (VYPFMWGGAQCFCDSENS) is E1 fusion peptide loop. Residues asparagine 945 and asparagine 1051 are each glycosylated (N-linked (GlcNAc...) asparagine; by host). Disulfide bonds link cysteine 1065–cysteine 1077, cysteine 1107–cysteine 1182, cysteine 1112–cysteine 1186, and cysteine 1134–cysteine 1176. Residues 1196–1245 (TPHKNDQEFQAAISKTSWSWLFALFGGASSLLIIGLMIFACSMMLTSTRR) adopt a coiled-coil conformation. A helical membrane pass occupies residues 1215–1239 (WLFALFGGASSLLIIGLMIFACSMM). Residues 1240–1245 (LTSTRR) lie on the Cytoplasmic side of the membrane.

The protein belongs to the alphavirus structural polyprotein family. In terms of assembly, homomultimer. Interacts with host karyopherin KPNA4; this interaction allows the nuclear import of the viral capsid protein. Interacts with spike glycoprotein E2. Interacts with host IRAK1; the interaction leads to inhibition of IRAK1-dependent signaling. As to quaternary structure, the precursor of protein E3/E2 and E1 form a heterodimer shortly after synthesis. The precursor of protein E3/E2 and E1 form a heterodimer shortly after synthesis. Processing of the precursor of protein E3/E2 into E2 and E3 results in a heterodimer of the spike glycoproteins E2 and E1. Spike at virion surface are constituted of a trimer of E2-E1 heterodimers. After target cell attachment and endocytosis, E1 change conformation to form homotrimers. E2-E1 heterodimers interact with host VLDLR or LRP8/APOER2 to mediate viral entry. Interacts with 6K protein. In terms of assembly, interacts with spike glycoprotein E1. Processing of the precursor of protein E3/E2 into E2 and E3 results in a heterodimer of the spike glycoproteins E2 and E1. Spike at virion surface are constituted of a trimer of E2-E1 heterodimers. E2-E1 heterodimers interact with host VLDLR or LRP8/APOER2 to mediate viral entry. Interacts with 6K protein. Interacts with the capsid protein. As to quaternary structure, oligomer. Interacts with spike glycoprotein E1. Interacts with spike glycoprotein E2. In terms of processing, specific enzymatic cleavages in vivo yield mature proteins. Capsid protein is auto-cleaved during polyprotein translation, unmasking a signal peptide at the N-terminus of the precursor of E3/E2. The remaining polyprotein is then targeted to the host endoplasmic reticulum, where host signal peptidase cleaves it into pE2, 6K and E1 proteins. pE2 is further processed to mature E3 and E2 by host furin in trans-Golgi vesicle. Post-translationally, palmitoylated via thioester bonds. These palmitoylations may induce disruption of the C-terminus transmembrane. This would result in the reorientation of E2 C-terminus from lumenal to cytoplasmic side. N-glycosylated. In terms of processing, palmitoylated via thioester bonds.

The protein resides in the virion. It localises to the host cytoplasm. Its subcellular location is the host cell membrane. The protein localises to the host nucleus. It is found in the virion membrane. The protein resides in the host Golgi apparatus. It localises to the host trans-Golgi network. Its subcellular location is the host endoplasmic reticulum. It catalyses the reaction Autocatalytic release of the core protein from the N-terminus of the togavirus structural polyprotein by hydrolysis of a -Trp-|-Ser- bond.. With respect to regulation, the channel activity is blocked by 5-N, N-Hexamethylene amiloride. In terms of biological role, forms an icosahedral capsid with a T=4 symmetry composed of 240 copies of the capsid protein surrounded by a lipid membrane through which penetrate 80 spikes composed of trimers of E1-E2 heterodimers. The capsid protein binds to the viral RNA genome at a site adjacent to a ribosome binding site for viral genome translation following genome release. Possesses a protease activity that results in its autocatalytic cleavage from the nascent structural protein. Following its self-cleavage, the capsid protein transiently associates with ribosomes, and within several minutes the protein binds to viral RNA and rapidly assembles into icosahedric core particles. The resulting nucleocapsid eventually associates with the cytoplasmic domain of the spike glycoprotein E2 at the cell membrane, leading to budding and formation of mature virions. In case of infection, new virions attach to target cells and after clathrin-mediated endocytosis their membrane fuses with the host endosomal membrane. This leads to the release of the nucleocapsid into the cytoplasm, followed by an uncoating event necessary for the genomic RNA to become accessible. The uncoating might be triggered by the interaction of capsid proteins with ribosomes. Binding of ribosomes would release the genomic RNA since the same region is genomic RNA-binding and ribosome-binding. Specifically inhibits interleukin-1 receptor-associated kinase 1/IRAK1-dependent signaling during viral entry, representing a means by which the alphaviruses may evade innate immune detection and activation prior to viral gene expression. Functionally, provides the signal sequence for the translocation of the precursor of protein E3/E2 to the host endoplasmic reticulum. Furin-cleaved E3 remains associated with spike glycoprotein E1 and mediates pH protection of the latter during the transport via the secretory pathway. After virion release from the host cell, the assembly protein E3 is gradually released in the extracellular space. Plays a role in viral attachment to target host cell, by binding to the cell receptors VLDLR or LRP8/APOER2. Synthesized as a pE2 precursor which is processed by furin at the cell membrane just before virion budding, giving rise to E2-E1 heterodimer. The pE2-E1 heterodimer is stable, whereas E2-E1 is unstable and dissociate at low pH. pE2 is processed at the last step, presumably to avoid E1 fusion activation before its final export to cell surface. E2 C-terminus contains a transitory transmembrane that would be disrupted by palmitoylation, resulting in reorientation of the C-terminal tail from lumenal to cytoplasmic side. This step is critical since E2 C-terminus is involved in budding by interacting with capsid proteins. This release of E2 C-terminus in cytoplasm occurs lately in protein export, and precludes premature assembly of particles at the endoplasmic reticulum membrane. Its function is as follows. Acts as a viroporin that participates in virus glycoprotein processing and transport to the plasma membrane, cell permeabilization and budding of viral particles. Disrupts the calcium homeostasis of the cell, probably at the endoplasmic reticulum level resulting in the increased levels of cytoplasmic calcium. Because of its lipophilic properties, the 6K protein is postulated to influence the selection of lipids that interact with the transmembrane domains of the glycoproteins, which, in turn, affects the deformability of the bilayer required for the extreme curvature that occurs as budding proceeds. Present in low amount in virions, about 3% compared to viral glycoproteins. In terms of biological role, class II viral fusion protein. Fusion activity is inactive as long as E1 is bound to E2 in mature virion. After virus attachment to target cell via host VLDLR or LRP8/APOER2 and endocytosis, acidification of the endosome induces dissociation of E1/E2 heterodimer and concomitant trimerization of the E1 subunits. This E1 trimer is fusion active, and promotes release of viral nucleocapsid in cytoplasm after endosome and viral membrane fusion. Efficient fusion requires the presence of cholesterol and sphingolipid in the target membrane. This is Structural polyprotein from Acrocephalus scirpaceus (Eurasian reed-warbler).